A 40-amino-acid polypeptide reads, in one-letter code: Sulfur globule protein TR2 (40 aa).

This sequence to C.vinosum CV3. As to quaternary structure, the protein envelope of the sulfur globules is composed of the three different proteins TR0, TR1 and TR2.

Functionally, structural protein of the sulfur globules, which are intracellular globules that serve for sulfur storage in purple sulfur bacteria. The protein is Sulfur globule protein TR2 of Thiocapsa roseopersicina.